A 405-amino-acid polypeptide reads, in one-letter code: tRNA (uracil(54)-C(5))-methyltransferase (405 aa).

Residues Cys61, Cys67, Cys70, and Cys137 each contribute to the [4Fe-4S] cluster site. Residues Gln252, Tyr278, Thr283, 299 to 300, Asp326, and Asp340 contribute to the S-adenosyl-L-methionine site; that span reads DS. The Nucleophile role is filled by Cys367. Glu399 (proton acceptor) is an active-site residue.

It belongs to the class I-like SAM-binding methyltransferase superfamily. RNA M5U methyltransferase family.

The enzyme catalyses uridine(54) in tRNA + S-adenosyl-L-methionine = 5-methyluridine(54) in tRNA + S-adenosyl-L-homocysteine + H(+). Activated by magnesium ions. Catalyzes the formation of 5-methyl-uridine at position 54 (m5U54) in tRNA. This Pyrococcus abyssi (strain GE5 / Orsay) protein is tRNA (uracil(54)-C(5))-methyltransferase.